The sequence spans 1343 residues: Vascular endothelial growth factor receptor 2 (1343 aa).

Positions 1–19 (MESRALLAVALWFCVETRA) are cleaved as a signal peptide. Topologically, residues 20–760 (ASVGLPGDSL…EGVQEKTNLE (741 aa)) are extracellular. Residues Asn-46, Asn-96, Asn-143, Asn-158, and Asn-245 are each glycosylated (N-linked (GlcNAc...) asparagine). Ig-like C2-type domains are found at residues 46 to 109 (NTTL…RDTD), 141 to 207 (NKNK…INDE), 224 to 320 (YDVV…KNKT), 328 to 414 (PFIA…HMVS), 421 to 540 (PQIG…RVIS), 547 to 654 (PEIT…LVKQ), and 663 to 749 (PMIT…TLFI). Cys-53 and Cys-103 are oxidised to a cystine. A disulfide bridge connects residues Cys-150 and Cys-200. A disulfide bridge links Cys-246 with Cys-307. Residues Asn-318, Asn-374, Asn-395, Asn-507, Asn-576, Asn-609, Asn-615, Asn-627, Asn-671, Asn-700, and Asn-717 are each glycosylated (N-linked (GlcNAc...) asparagine). 2 cysteine pairs are disulfide-bonded: Cys-445–Cys-526 and Cys-567–Cys-638. A disulfide bond links Cys-684 and Cys-733. A helical membrane pass occupies residues 761-781 (VIILVGTAVIAMFFWLLLVIL). The Cytoplasmic portion of the chain corresponds to 782–1343 (VRTVKRANEG…SGTTLRSSPV (562 aa)). At Tyr-797 the chain carries Phosphotyrosine. Positions 830 to 1158 (LKLGKPLGRG…FSELVEHLGN (329 aa)) constitute a Protein kinase domain. ATP is bound by residues 836–844 (LGRGAFGQV) and Lys-864. The residue at position 947 (Tyr-947) is a Phosphotyrosine; by autocatalysis. A phosphoserine mark is found at Ser-978 and Ser-980. Tyr-992 carries the phosphotyrosine; by autocatalysis modification. Cys-1020 and Cys-1041 are oxidised to a cystine. Asp-1024 acts as the Proton acceptor in catalysis. A phosphotyrosine; by autocatalysis mark is found at Tyr-1050, Tyr-1055, Tyr-1171, and Tyr-1210. Ser-1227 and Ser-1231 each carry phosphoserine. Thr-1234 carries the phosphothreonine modification. Residues 1267 to 1314 (TLEDRNKLSPSFGGMMPSKSRESVASEGSNQTSGYQSGYHSDDTDTTV) are disordered. The span at 1292–1305 (SEGSNQTSGYQSGY) shows a compositional bias: polar residues. Tyr-1301, Tyr-1305, and Tyr-1315 each carry phosphotyrosine; by autocatalysis.

It belongs to the protein kinase superfamily. Tyr protein kinase family. CSF-1/PDGF receptor subfamily. Homodimer in the presence of bound dimeric VEGFA, VEGFC or VEGFD ligands; monomeric in the absence of bound ligands. Can also form heterodimers with FLT1/VEGFR1 and KDR/VEGFR2. Interacts (tyrosine phosphorylated) with LFYN, NCK1, PLCG1. Interacts (tyrosine-phosphorylated active form preferentially) with DAB2IP (via C2 domain and active form preferentially); the interaction occurs at the late phase of VEGFA response and inhibits KDR/VEGFR2 activity. Interacts with SHBSH2D2A/TSAD, GRB2, MYOF, CBL and PDCD6. Interacts (via C-terminus domain) with ERN1 (via kinase domain); the interaction is facilitated in a XBP1- and vascular endothelial growth factor (VEGF)-dependent manner in endothelial cells. Interacts (via juxtamembrane region) with chaperone PDCL3 (via thioredoxin fold region); the interaction leads to increased KDR/VEGFR2 abundance through inhibition of its ubiquitination and degradation. Interacts (tyrosine phosphorylated) with CCDC88A/GIV (via SH2-like region); binding requires autophosphorylation of the KDR/VEGFR2 C-terminal region. Interacts with isoform 2 of BSG. Interacts with SLC31A1; this interaction is induced upon VEGFA stimulation leading to SLC31A1 and KDR subsequent co-internalization to early endosomes, thereby activating KDR downstream signaling in endothelial cells. In terms of processing, N-glycosylated. Post-translationally, ubiquitinated. Tyrosine phosphorylation of the receptor promotes its poly-ubiquitination, leading to its degradation via the proteasome or lysosomal proteases. Autophosphorylated on tyrosine residues upon ligand binding. Autophosphorylation occurs in trans, i.e. one subunit of the dimeric receptor phosphorylates tyrosine residues on the other subunit. Phosphorylation at Tyr-947 is important for interaction with SH2D2A/TSAD and VEGFA-mediated reorganization of the actin cytoskeleton. Phosphorylation at Tyr-1171 is important for interaction with PLCG1 and SHB. Phosphorylation at Tyr-1210 is important for interaction with NCK1 and FYN. Dephosphorylated by PTPRB. Dephosphorylated by PTPRJ at Tyr-797, Tyr-947, Tyr-992, Tyr-1050, Tyr-1055, Tyr-1171 and Tyr-1210. In terms of processing, the inhibitory disulfide bond between Cys-1020 and Cys-1041 may serve as a specific molecular switch for H(2)S-induced modification that regulates KDR/VEGFR2 function. As to expression, expressed in the post-pubertal mammary glands.

Its subcellular location is the cell membrane. It localises to the cytoplasm. The protein localises to the nucleus. The protein resides in the cytoplasmic vesicle. It is found in the early endosome. Its subcellular location is the cell junction. It localises to the endoplasmic reticulum. It carries out the reaction L-tyrosyl-[protein] + ATP = O-phospho-L-tyrosyl-[protein] + ADP + H(+). Present in an inactive conformation in the absence of bound ligand. Binding of VEGFA, VEGFC or VEGFD leads to dimerization and activation by autophosphorylation on tyrosine residues. May be regulated by hydrogen sulfide (H(2)S) levels via a sensitive intracellular disulfide bond. Functionally, tyrosine-protein kinase that acts as a cell-surface receptor for VEGFA, VEGFC and VEGFD. Plays an essential role in the regulation of angiogenesis, vascular development, vascular permeability, and embryonic hematopoiesis. Promotes proliferation, survival, migration and differentiation of endothelial cells. Promotes reorganization of the actin cytoskeleton. Isoforms lacking a transmembrane domain may function as decoy receptors for VEGFA, VEGFC and/or VEGFD. Modulates FLT1 and FLT4 signaling by forming heterodimers. Binding of vascular growth factors to isoform 1 leads to the activation of several signaling cascades. Activation of PLCG1 leads to the production of the cellular signaling molecules diacylglycerol and inositol-1,4,5-trisphosphate and the activation of protein kinase C. Mediates activation of MAPK1/ERK2, MAPK3/ERK1 and the MAP kinase signaling pathway, as well as of the AKT1 signaling pathway. Mediates phosphorylation of PIK3R1, the regulatory subunit of phosphatidylinositol 3-kinase, reorganization of the actin cytoskeleton and activation of PTK2/FAK1. Required for VEGFA-mediated induction of NOS2 and NOS3, leading to the production of the signaling molecule nitric oxide (NO) by endothelial cells. Phosphorylates PLCG1. Promotes phosphorylation of FYN, NCK1, NOS3, PIK3R1, PTK2/FAK1 and SRC. The chain is Vascular endothelial growth factor receptor 2 from Rattus norvegicus (Rat).